The primary structure comprises 91 residues: Acylphosphatase (91 aa).

One can recognise an Acylphosphatase-like domain in the interval 4-91 (RYLIKVLGRV…DNEKSFKIVY (88 aa)). Residues Arg19 and Asn37 contribute to the active site.

The protein belongs to the acylphosphatase family.

It carries out the reaction an acyl phosphate + H2O = a carboxylate + phosphate + H(+). This Clostridium acetobutylicum (strain ATCC 824 / DSM 792 / JCM 1419 / IAM 19013 / LMG 5710 / NBRC 13948 / NRRL B-527 / VKM B-1787 / 2291 / W) protein is Acylphosphatase (acyP).